Here is a 397-residue protein sequence, read N- to C-terminus: MMIKVGAAINGTDSPKAMKREHDNDDGDRTGRHKRPKTDGFTEAIQQGKFEVRLLVSSKSAGAIIGKGGENIKRLRAEFNAHVQVPDSNTPERVCTVTADEKTVLNILKDVLPRLEDNFSERDPCEVRMLVHQSHAGALIGRNGSKIKELREKCSARLKIFTGCAPGSTDRVLITSGEQKNVLGIIEEVMKELKEIPIKGSATPYLPAFNYDPSNISDYGGFPGNMPAGGPPNNRGPAPQRGGQGPPGGPRSYGGAITQGGGQRSFEAGDFQQFRGGPGPVPGYAMSAPGYPPQQGQFGAPNNAGYGYGPGGGGPVTTAQVTIPSDLGGTIIGRGGERIARIRQESGAQITLEQSNGQPERIITIKGTEQQIHSAQYLLQQCVRNSTQGRERFGGSV.

Residues 1 to 41 (MMIKVGAAINGTDSPKAMKREHDNDDGDRTGRHKRPKTDGF) are disordered. Residues 16 to 30 (KAMKREHDNDDGDRT) are compositionally biased toward basic and acidic residues. 2 consecutive KH domains span residues 49 to 111 (KFEV…LKDV) and 124 to 189 (PCEV…IEEV). Residues 220–279 (GGFPGNMPAGGPPNNRGPAPQRGGQGPPGGPRSYGGAITQGGGQRSFEAGDFQQFRGGPG) form a disordered region. Positions 224-241 (GNMPAGGPPNNRGPAPQR) are enriched in low complexity. Residues 316–379 (VTTAQVTIPS…QQIHSAQYLL (64 aa)) enclose the KH 3 domain.

Interacts with alg-1; the interaction is direct and may be strengthened through RNA-protein association. As to expression, expressed in gut, muscle, neuronal and hypodermal tissues. Highly expressed in the germline and oocytes.

It is found in the nucleus. Its subcellular location is the cytoplasm. In terms of biological role, RNA-binding protein which functions together with alg-1, a component of the miRNA loading complex, to modulate the processing and activity of specific miRNAs such as miR-58 and let-7 to regulate gene expression at the post-transcriptional level during embryonic, hypodermal and neuronal development. Promotes the lsy-6-mediated repression of cog-1 in uterine cells. In embryos, may play a role in the DNA damage response. The polypeptide is Heterogeneous nuclear ribonucleoprotein K homolog (Caenorhabditis elegans).